The following is a 380-amino-acid chain: Erythronate-4-phosphate dehydrogenase (380 aa).

Residues serine 45 and threonine 66 each coordinate substrate. NAD(+)-binding positions include 126 to 127, aspartate 146, threonine 174, 205 to 207, and aspartate 231; these read QV and ASR. The active site involves arginine 207. The active site involves glutamate 236. The active-site Proton donor is the histidine 253. An NAD(+)-binding site is contributed by glycine 256. A substrate-binding site is contributed by tyrosine 257.

Belongs to the D-isomer specific 2-hydroxyacid dehydrogenase family. PdxB subfamily. As to quaternary structure, homodimer.

Its subcellular location is the cytoplasm. It carries out the reaction 4-phospho-D-erythronate + NAD(+) = (R)-3-hydroxy-2-oxo-4-phosphooxybutanoate + NADH + H(+). Its pathway is cofactor biosynthesis; pyridoxine 5'-phosphate biosynthesis; pyridoxine 5'-phosphate from D-erythrose 4-phosphate: step 2/5. Catalyzes the oxidation of erythronate-4-phosphate to 3-hydroxy-2-oxo-4-phosphonooxybutanoate. In Pseudomonas syringae pv. tomato (strain ATCC BAA-871 / DC3000), this protein is Erythronate-4-phosphate dehydrogenase.